Reading from the N-terminus, the 291-residue chain is Ribosome biogenesis protein BRX1 (291 aa).

A Brix domain is found at 31 to 232 (QRTLLISSRG…VILILEGSFG (202 aa)). Serine 285 is subject to Phosphoserine.

Belongs to the BRX1 family. In terms of assembly, part of a complex that includes BRX1, RPF1, RPF2 and SSF1 or SSF2.

Its subcellular location is the nucleus. It is found in the nucleolus. Functionally, required for biogenesis of the 60S ribosomal subunit. In Saccharomyces cerevisiae (strain ATCC 204508 / S288c) (Baker's yeast), this protein is Ribosome biogenesis protein BRX1 (BRX1).